A 324-amino-acid chain; its full sequence is Short chain dehydrogenase/reductase dmxR8 (324 aa).

4 residues coordinate NADP(+): leucine 33, lysine 58, aspartate 83, and asparagine 110. Serine 163 acts as the Proton donor in catalysis. NADP(+)-binding residues include tyrosine 200 and lysine 204. Tyrosine 200 acts as the Proton acceptor in catalysis. Catalysis depends on lysine 204, which acts as the Lowers pKa of active site Tyr.

This sequence belongs to the short-chain dehydrogenases/reductases (SDR) family.

Its pathway is secondary metabolite biosynthesis. Functionally, short chain dehydrogenase; part of the gene cluster that mediates the biosynthesis of the dimeric xanthones cryptosporioptides. The pathway begins with the synthesis of atrochrysone thioester by the polyketide synthase dmx-nrPKS. The atrochrysone carboxyl ACP thioesterase dmxR1 then breaks the thioester bond and releases the atrochrysone carboxylic acid from dmx-nrPKS. Atrochrysone carboxylic acid is decarboxylated by the decarboxylase dmxR15, and oxidized by the anthrone oxygenase dmxR16 to yield emodin. Emodin is then reduced to emodin hydroquinone by the oxidoreductase dmxR7. A-ring reduction by the short chain dehydrogenase dmxR18, dehydration by the scytalone dehydratase-like protein dmxR17 and probable spontaneous re-oxidation, results in overall deoxygenation to chrysophanol. Baeyer-Villiger oxidation by the Baeyer-Villiger monooxygenase (BVMO) dmxR6 then yields monodictylactone in equilibrium with monodictyphenone. In the case of the cryptosporioptides biosynthesis, monodictylactone is reduced at C-12 to an alcohol (by the short chain dehydrogenases dmxR12 or dmxR8) and hydroxylated at C-5 by dmxR9, yielding the electron-rich aromatic which could eliminate H(2)O to form the ortho-quinonemethide, followed by tautomerisation to paraquinone and complete the formal reduction to produce the 10-methylgroup. Conjugate addition of C-4a-OH to the resulting paraquinone by the monooxygenase dmxR10 then gives cyclohexadienone, which is then reduced at C-5 by the short chain dehydrogenase dmxR3 to give the dihydroxanthone. The 6,7-epoxide in the cryptosporioptides could be introduced by the cytochrome P450 monooxygenase dmxL3. The highly reducing PKS dmxL2 manufactures butyrate, which is further carboxylated by dmxL1 to form ethylmalonate. It is not yet clear whether the carboxylation occurs while the butyrate is attached to the ACP of dmxL2, but this unusual fungal metabolite could then be esterified to O-5 by the O-acetyltransferase dmxR13. Finally, dimerization performed by dmxR5 gives the observed dimers cryptosporioptides A, B and C as the final products of the pathway. The protein is Short chain dehydrogenase/reductase dmxR8 of Cryptosporiopsis sp. (strain 8999).